The chain runs to 567 residues: Proline--tRNA ligase (567 aa).

This sequence belongs to the class-II aminoacyl-tRNA synthetase family. ProS type 1 subfamily. Homodimer.

Its subcellular location is the cytoplasm. The catalysed reaction is tRNA(Pro) + L-proline + ATP = L-prolyl-tRNA(Pro) + AMP + diphosphate. Its function is as follows. Catalyzes the attachment of proline to tRNA(Pro) in a two-step reaction: proline is first activated by ATP to form Pro-AMP and then transferred to the acceptor end of tRNA(Pro). As ProRS can inadvertently accommodate and process non-cognate amino acids such as alanine and cysteine, to avoid such errors it has two additional distinct editing activities against alanine. One activity is designated as 'pretransfer' editing and involves the tRNA(Pro)-independent hydrolysis of activated Ala-AMP. The other activity is designated 'posttransfer' editing and involves deacylation of mischarged Ala-tRNA(Pro). The misacylated Cys-tRNA(Pro) is not edited by ProRS. This is Proline--tRNA ligase from Stenotrophomonas maltophilia (strain R551-3).